Here is a 38-residue protein sequence, read N- to C-terminus: Kunitz-type trypsin inhibitor beta chain (38 aa).

The protein belongs to the protease inhibitor I3 (leguminous Kunitz-type inhibitor) family. In terms of assembly, heterodimer of an alpha and a beta chain linked by a disulfide bond.

Its function is as follows. Inhibition of trypsin. The sequence is that of Kunitz-type trypsin inhibitor beta chain from Neltuma juliflora (Mesquite).